Here is a 147-residue protein sequence, read N- to C-terminus: Cytochrome c-type biogenesis protein CcmE (147 aa).

Over 1–9 (MKNLKKQRR) the chain is Cytoplasmic. The chain crosses the membrane as a helical; Signal-anchor for type II membrane protein span at residues 10–30 (IQVIALATVALVLSTALIGYA). Over 31–147 (MRDGINFFRA…EQGVYKGTEG (117 aa)) the chain is Periplasmic. Positions 123 and 127 each coordinate heme.

It belongs to the CcmE/CycJ family.

It localises to the cell inner membrane. Its function is as follows. Heme chaperone required for the biogenesis of c-type cytochromes. Transiently binds heme delivered by CcmC and transfers the heme to apo-cytochromes in a process facilitated by CcmF and CcmH. This chain is Cytochrome c-type biogenesis protein CcmE, found in Roseobacter denitrificans (strain ATCC 33942 / OCh 114) (Erythrobacter sp. (strain OCh 114)).